We begin with the raw amino-acid sequence, 155 residues long: Small ribosomal subunit protein uS7 (155 aa).

Belongs to the universal ribosomal protein uS7 family. In terms of assembly, part of the 30S ribosomal subunit. Contacts proteins S9 and S11.

Functionally, one of the primary rRNA binding proteins, it binds directly to 16S rRNA where it nucleates assembly of the head domain of the 30S subunit. Is located at the subunit interface close to the decoding center, probably blocks exit of the E-site tRNA. The polypeptide is Small ribosomal subunit protein uS7 (Nautilia profundicola (strain ATCC BAA-1463 / DSM 18972 / AmH)).